Here is a 484-residue protein sequence, read N- to C-terminus: Sialidase-4 (484 aa).

Residues 22-25 (YRVP) carry the FRIP motif motif. 2 residues coordinate substrate: arginine 23 and arginine 43. Residues aspartate 47 and aspartate 48 each act as proton acceptor in the active site. The BNR 1 repeat unit spans residues 127 to 138 (VASRDAGLSWGS). 2 residues coordinate substrate: tyrosine 177 and tyrosine 179. One copy of the BNR 2 repeat lies at 200-211 (FYSDDHGRTWRC). Residues glutamate 222 and arginine 242 each coordinate substrate. One copy of the BNR 3 repeat lies at 251 to 262 (ALSTDEGTSFLP). The tract at residues 284–357 (PAPAPNRPRD…GPRPGVSGDV (74 aa)) is disordered. Residues 336-345 (RLQPRGDGPR) show a composition bias toward low complexity. Arginine 389 lines the substrate pocket. The active-site Nucleophile is tyrosine 419. Residue glutamate 440 is part of the active site.

It belongs to the glycosyl hydrolase 33 family. N-glycosylated. As to expression, predominant form in liver. Also expressed in brain, kidney and colon. Highly expressed in brain and at lower levels in kidney and liver.

It is found in the cell membrane. The protein resides in the endoplasmic reticulum membrane. It localises to the microsome membrane. Its subcellular location is the mitochondrion membrane. The protein localises to the cell projection. It is found in the neuron projection. The protein resides in the mitochondrion inner membrane. It localises to the mitochondrion outer membrane. Its subcellular location is the lysosome lumen. The enzyme catalyses Hydrolysis of alpha-(2-&gt;3)-, alpha-(2-&gt;6)-, alpha-(2-&gt;8)- glycosidic linkages of terminal sialic acid residues in oligosaccharides, glycoproteins, glycolipids, colominic acid and synthetic substrates.. It carries out the reaction a ganglioside GM3 + H2O = a beta-D-galactosyl-(1-&gt;4)-beta-D-glucosyl-(1&lt;-&gt;1)-ceramide + N-acetylneuraminate. It catalyses the reaction a ganglioside GM3 (d18:1(4E)) + H2O = a beta-D-Gal-(1-&gt;4)-beta-D-Glc-(1&lt;-&gt;1)-Cer(d18:1(4E)) + N-acetylneuraminate. The catalysed reaction is a ganglioside GM2 + H2O = a ganglioside GA2 + N-acetylneuraminate. The enzyme catalyses a ganglioside GM2 (d18:1(4E)) + H2O = a ganglioside GA2 (d18:1(4E)) + N-acetylneuraminate. It carries out the reaction a ganglioside GD1a + H2O = a ganglioside GM1 + N-acetylneuraminate. It catalyses the reaction a ganglioside GD1a (d18:1(4E)) + H2O = a ganglioside GM1 (d18:1(4E)) + N-acetylneuraminate. The catalysed reaction is a ganglioside GD3 + H2O = a ganglioside GM3 + N-acetylneuraminate. The enzyme catalyses a ganglioside GD3 (d18:1(4E)) + H2O = a ganglioside GM3 (d18:1(4E)) + N-acetylneuraminate. In terms of biological role, exo-alpha-sialidase that catalyzes the hydrolytic cleavage of the terminal sialic acid (N-acetylneuraminic acid, Neu5Ac) of a glycan moiety in the catabolism of glycolipids, glycoproteins and oligosacharides. Efficiently hydrolyzes gangliosides including alpha-(2-&gt;3)-sialylated GD1a and GM3 and alpha-(2-&gt;8)-sialylated GD3. Hydrolyzes poly-alpha-(2-&gt;8)-sialylated neural cell adhesion molecule NCAM1 likely at growth cones, suppressing neurite outgrowth in hippocampal neurons. May desialylate sialyl Lewis A and X antigens at the cell surface, down-regulating these glycan epitopes recognized by SELE/E selectin in the initiation of cell adhesion and extravasation. Has sialidase activity toward mucin, fetuin and sialyllactose. The sequence is that of Sialidase-4 (NEU4) from Homo sapiens (Human).